The primary structure comprises 728 residues: Ribosome biogenesis protein bop1-B (728 aa).

The tract at residues 1 to 114 is disordered; the sequence is MKRGSKRESG…ENDSSDEEDI (114 aa). Positions 50 to 67 are enriched in acidic residues; it reads SGTDSSDDEEDHSSEEVQ. 7 WD repeats span residues 393–432, 434–474, 514–556, 559–597, 600–639, 643–682, and 698–728; these read GHKD…CMKS, VLEG…RLLC, KHQK…SQNP, KNKG…LTKK, TNCK…KPYK, HHKK…DLLQ, and HRDL…RLFT.

It belongs to the WD repeat BOP1/ERB1 family. Component of the PeBoW complex, composed of bop1, pes1 and wdr12. The complex is held together by bop1, which interacts with pes1 via its N-terminal domain and with wdr12 via a high-affinity interaction between the seven-bladed beta-propeller domains of the 2 proteins. The PeBoW complex associates with the 66S pre-ribosome.

The protein resides in the nucleus. It localises to the nucleolus. Its subcellular location is the nucleoplasm. Its function is as follows. Component of the PeBoW complex, which is required for maturation of 28S and 5.8S ribosomal RNAs and formation of the 60S ribosome. This chain is Ribosome biogenesis protein bop1-B (bop1-b), found in Xenopus laevis (African clawed frog).